The primary structure comprises 243 residues: Complement C1q tumor necrosis factor-related protein 5 (243 aa).

An N-terminal signal peptide occupies residues 1–15; it reads MRPLLVLLLLGLAAG. Residues 15–125 form a disordered region; that stretch reads GSPPLDDNKI…PPPSDAPLPF (111 aa). The region spanning 30-95 is the Collagen-like domain; the sequence is GHPGLPGTPG…AGPAGPTGPA (66 aa). Positions 83-96 are enriched in low complexity; that stretch reads RGEAGPAGPTGPAG. Residues 99–238 form the C1q domain; that stretch reads SVPPRSAFSA…GFLVYSDWHS (140 aa).

As to quaternary structure, may interact with ERFE. Homotrimer (via collagen-like domain). May form higher order oligomers by supercoiling of the trimers.

Its subcellular location is the secreted. This is Complement C1q tumor necrosis factor-related protein 5 (C1QTNF5) from Homo sapiens (Human).